The chain runs to 278 residues: 4-deoxy-L-threo-5-hexosulose-uronate ketol-isomerase (278 aa).

Zn(2+) is bound by residues His196, His198, Glu203, and His245.

It belongs to the KduI family. Requires Zn(2+) as cofactor.

The catalysed reaction is 5-dehydro-4-deoxy-D-glucuronate = 3-deoxy-D-glycero-2,5-hexodiulosonate. The protein operates within glycan metabolism; pectin degradation; 2-dehydro-3-deoxy-D-gluconate from pectin: step 4/5. In terms of biological role, catalyzes the isomerization of 5-dehydro-4-deoxy-D-glucuronate to 3-deoxy-D-glycero-2,5-hexodiulosonate. This chain is 4-deoxy-L-threo-5-hexosulose-uronate ketol-isomerase, found in Edwardsiella ictaluri (strain 93-146).